The following is a 529-amino-acid chain: Probable biotin-dependent acyl-coenzyme A carboxylase beta2 subunit (529 aa).

A CoA carboxyltransferase N-terminal domain is found at 20–271; it reads MSGKLDEINA…IKQGPAPAPV (252 aa). Residues 270 to 520 form the CoA carboxyltransferase C-terminal domain; sequence PVTEPLFDAE…SAIANGPIKG (251 aa).

This sequence belongs to the AccD/PCCB family. The biotin-dependent acyl-CoA carboxylase complex is composed of an AccA protein, which contains the biotin carboxylase (BC) and biotin carboxyl carrier protein (BCCP) domains, and an AccD protein, which contains the carboxyl transferase (CT) domain.

Component of a biotin-dependent acyl-CoA carboxylase complex. This subunit transfers the CO2 from carboxybiotin to the CoA ester substrate. This chain is Probable biotin-dependent acyl-coenzyme A carboxylase beta2 subunit (accD2), found in Mycobacterium tuberculosis (strain ATCC 25618 / H37Rv).